Here is an 87-residue protein sequence, read N- to C-terminus: Neutrophil antibiotic peptide NP-3B (87 aa).

Positions 1-19 are cleaved as a signal peptide; the sequence is MRTLILLTTLLLLALHTQA. A propeptide spanning residues 20 to 58 is cleaved from the precursor; that stretch reads ESPQGSTKEAPDEEQDISVFFGGDKGTALQDAAVKAGVT. Cystine bridges form between Cys-59–Cys-87, Cys-61–Cys-76, and Cys-66–Cys-86.

It belongs to the alpha-defensin family.

It is found in the secreted. Active in vitro against S.aureus, fungi, Gram-positive and Gram-negative bacteria and to a lesser extent against an enveloped virus. The sequence is that of Neutrophil antibiotic peptide NP-3B from Rattus norvegicus (Rat).